The primary structure comprises 162 residues: Large ribosomal subunit protein uL10 (162 aa).

This sequence belongs to the universal ribosomal protein uL10 family. As to quaternary structure, part of the ribosomal stalk of the 50S ribosomal subunit. The N-terminus interacts with L11 and the large rRNA to form the base of the stalk. The C-terminus forms an elongated spine to which L12 dimers bind in a sequential fashion forming a multimeric L10(L12)X complex.

In terms of biological role, forms part of the ribosomal stalk, playing a central role in the interaction of the ribosome with GTP-bound translation factors. The protein is Large ribosomal subunit protein uL10 of Vibrio parahaemolyticus serotype O3:K6 (strain RIMD 2210633).